Consider the following 729-residue polypeptide: Fatty acid oxidation complex subunit alpha (729 aa).

The enoyl-CoA hydratase/isomerase stretch occupies residues 1-189 (MLYKGDTLYL…KIGLVDGVVK (189 aa)). Residue D296 coordinates substrate. The tract at residues 311–729 (ETPKQAAVLG…ARPVGSLKTA (419 aa)) is 3-hydroxyacyl-CoA dehydrogenase. NAD(+) contacts are provided by residues M324, D343, 400–402 (VVE), K407, and S429. H450 serves as the catalytic For 3-hydroxyacyl-CoA dehydrogenase activity. N453 provides a ligand contact to NAD(+). N500 and Y660 together coordinate substrate. A disordered region spans residues 708–729 (RHNEPYYPPVEPARPVGSLKTA).

In the N-terminal section; belongs to the enoyl-CoA hydratase/isomerase family. This sequence in the C-terminal section; belongs to the 3-hydroxyacyl-CoA dehydrogenase family. Heterotetramer of two alpha chains (FadB) and two beta chains (FadA).

The enzyme catalyses a (3S)-3-hydroxyacyl-CoA + NAD(+) = a 3-oxoacyl-CoA + NADH + H(+). It carries out the reaction a (3S)-3-hydroxyacyl-CoA = a (2E)-enoyl-CoA + H2O. It catalyses the reaction a 4-saturated-(3S)-3-hydroxyacyl-CoA = a (3E)-enoyl-CoA + H2O. The catalysed reaction is (3S)-3-hydroxybutanoyl-CoA = (3R)-3-hydroxybutanoyl-CoA. The enzyme catalyses a (3Z)-enoyl-CoA = a 4-saturated (2E)-enoyl-CoA. It carries out the reaction a (3E)-enoyl-CoA = a 4-saturated (2E)-enoyl-CoA. It functions in the pathway lipid metabolism; fatty acid beta-oxidation. Functionally, involved in the aerobic and anaerobic degradation of long-chain fatty acids via beta-oxidation cycle. Catalyzes the formation of 3-oxoacyl-CoA from enoyl-CoA via L-3-hydroxyacyl-CoA. It can also use D-3-hydroxyacyl-CoA and cis-3-enoyl-CoA as substrate. This Salmonella schwarzengrund (strain CVM19633) protein is Fatty acid oxidation complex subunit alpha.